Reading from the N-terminus, the 425-residue chain is Nicotinate dehydrogenase large molybdopterin subunit (425 aa).

Residues glutamine 208 and 238-240 (GFG) contribute to the Se-Mo-molybdopterin cytosine dinucleotide site.

The protein belongs to the xanthine dehydrogenase family. In terms of assembly, heterooctamer of NDHM, NDHL, NDHS and NDHF. Dimer of heterotetramers. Requires Se-Mo-molybdopterin cytosine dinucleotide as cofactor.

The enzyme catalyses nicotinate + NADP(+) + H2O = 6-hydroxynicotinate + NADPH + H(+). It participates in cofactor degradation; nicotinate degradation; 6-hydroxynicotinate from nicotinate: step 1/1. Reversibly inactivated by selenide and sulfide. Not inhibited by cyanide. In terms of biological role, catalyzes the hydroxylation of nicotinate to 6-hydroxynicotinate. Also active against 2-pyrazinecarboxylic acid, but inactive against other nicotinate analogs. In Eubacterium barkeri (Clostridium barkeri), this protein is Nicotinate dehydrogenase large molybdopterin subunit (ndhL).